Reading from the N-terminus, the 514-residue chain is Efflux pump aflT (514 aa).

10 helical membrane passes run 13-33, 61-81, 85-105, 116-136, 146-166, 174-194, 218-238, 247-267, 289-309, and 321-341; these read ISGM…FCVA, SAYL…YALF, WVFL…GVAP, IAGV…AHIV, GLLG…GGAF, WCFY…LFLL, GTIV…WGGV, IIAL…IQVL, VFVF…PIWF, and GIDS…SGAV. N-linked (GlcNAc...) asparagine glycosylation occurs at asparagine 343. The next 4 membrane-spanning stretches (helical) occupy residues 351-371, 378-398, 411-431, and 485-505; these read WFIV…LFTV, WIGF…QGAV, IGTA…TSVA, and LDVF…AVGI.

Belongs to the major facilitator superfamily. TCR/Tet family.

Its subcellular location is the cell membrane. In terms of biological role, efflux pump; part of the gene cluster that mediates the biosynthesis of aflatoxins. This is Efflux pump aflT from Aspergillus parasiticus (strain ATCC 56775 / NRRL 5862 / SRRC 143 / SU-1).